Consider the following 308-residue polypeptide: Transaldolase (308 aa).

Lys-125 acts as the Schiff-base intermediate with substrate in catalysis.

The protein belongs to the transaldolase family. Type 1 subfamily. Homodimer.

Its subcellular location is the cytoplasm. It carries out the reaction D-sedoheptulose 7-phosphate + D-glyceraldehyde 3-phosphate = D-erythrose 4-phosphate + beta-D-fructose 6-phosphate. The protein operates within carbohydrate degradation; pentose phosphate pathway; D-glyceraldehyde 3-phosphate and beta-D-fructose 6-phosphate from D-ribose 5-phosphate and D-xylulose 5-phosphate (non-oxidative stage): step 2/3. In terms of biological role, transaldolase is important for the balance of metabolites in the pentose-phosphate pathway. In Pseudomonas putida (strain ATCC 47054 / DSM 6125 / CFBP 8728 / NCIMB 11950 / KT2440), this protein is Transaldolase.